Here is a 732-residue protein sequence, read N- to C-terminus: MTEGTCLRRRGGPYKTEPATDLGRWRLNCERGRQTWTYLQDERAGREQTGLEAYALGLDTKNYFKDLPKAHTAFEGALNGMTFYVGLQAEDGHWTGDYGGPLFLLPGLLITCHVARIPLPAGYREEIVRYLRSVQLPDGGWGLHIEDKSTVFGTALNYVSLRILGVGPDDPDLVRARNILHKKGGAVAIPSWGKFWLAVLNVYSWEGLNTLFPEMWLFPDWAPAHPSTLWCHCRQVYLPMSYCYAVRLSAAEDPLVQSLRQELYVEDFASIDWLAQRNNVAPDELYTPHSWLLRVVYALLNLYEHHHSAHLRQRAVQKLYEHIVADDRFTKSISIGPISKTINMLVRWYVDGPASTAFQEHVSRIPDYLWMGLDGMKMQGTNGSQIWDTAFAIQALLEAGGHHRPEFSSCLQKAHEFLRLSQVPDNPPDYQKYYRQMRKGGFSFSTLDCGWIVSDCTAEALKAVLLLQEKCPHVTEHIPRERLCDAVAVLLNMRNPDGGFATYETKRGGHLLELLNPSEVFGDIMIDYTYVECTSAVMQALKYFHKRFPEHRAAEIRETLTQGLEFCRRQQRADGSWEGSWGVCFTYGTWFGLEAFACMGQTYRDGTACAEVSRACDFLLSRQMADGGWGEDFESCEERRYLQSAQSQIHNTCWAMMGLMAVRHPDIEAQERGVRCLLEKQLPNGDWPQENIAGVFNKSCAISYTSYRNIFPIWALGRFSQLYPERALAGHP.

Thr2 is subject to N-acetylthreonine. 7 PFTB repeats span residues 77 to 121 (ALNG…PLPA), 124 to 165 (REEI…RILG), 424 to 468 (PDNP…LLLQ), 483 to 528 (LCDA…MIDY), 560 to 600 (LTQG…ACMG), 612 to 653 (VSRA…HNTC), and 670 to 712 (QERG…NIFP). Asp455 (proton donor) is an active-site residue.

It belongs to the terpene cyclase/mutase family. In terms of assembly, monomer. As to expression, widely expressed. Expressed in the hair bulb, the outer root sheath and hair matrix of the hair follicle epithelium. Also detected in dermal papilla, epidermis, sweat glands, sebaceous glands, and blood vessels.

It is found in the endoplasmic reticulum membrane. The enzyme catalyses (S)-2,3-epoxysqualene = lanosterol. Its pathway is terpene metabolism; lanosterol biosynthesis; lanosterol from farnesyl diphosphate: step 3/3. Functionally, key enzyme in the cholesterol biosynthesis pathway. Catalyzes the cyclization of (S)-2,3 oxidosqualene to lanosterol, a reaction that forms the sterol nucleus. Through the production of lanosterol may regulate lens protein aggregation and increase transparency. The protein is Lanosterol synthase (LSS) of Homo sapiens (Human).